Reading from the N-terminus, the 60-residue chain is Short neurotoxin 1 (60 aa).

Intrachain disulfides connect Cys-3-Cys-22, Cys-17-Cys-39, Cys-41-Cys-52, and Cys-53-Cys-58.

It belongs to the three-finger toxin family. Short-chain subfamily. Type I alpha-neurotoxin sub-subfamily. In terms of tissue distribution, expressed by the venom gland.

It localises to the secreted. In terms of biological role, binds to muscle nicotinic acetylcholine receptor (nAChR) and inhibit acetylcholine from binding to the receptor, thereby impairing neuromuscular transmission. The chain is Short neurotoxin 1 from Hydrophis ornatus (Ornate reef seasnake).